Here is a 227-residue protein sequence, read N- to C-terminus: Ornithine decarboxylase antizyme 1 (227 aa).

The protein belongs to the ODC antizyme family. As to quaternary structure, interacts with ODC1 and thereby sterically blocks ODC homodimerization. Forms a ternary complex with PSMB4 and OAZ1 before PSMB4 is incorporated into the 20S proteasome. Interacts with AZIN2; this interaction disrupts the interaction between the antizyme and ODC1. Interacts with FAM171A1.

Functionally, ornithine decarboxylase (ODC) antizyme protein that negatively regulates ODC activity and intracellular polyamine biosynthesis and uptake in response to increased intracellular polyamine levels. Binds to ODC monomers, inhibiting the assembly of the functional ODC homodimer, and targets the monomers for ubiquitin-independent proteolytic destruction by the 26S proteasome. Triggers ODC degradation by inducing the exposure of a cryptic proteasome-interacting surface of ODC. Stabilizes AZIN2 by interfering with its ubiquitination. Also inhibits cellular uptake of polyamines by inactivating the polyamine uptake transporter. SMAD1/OAZ1/PSMB4 complex mediates the degradation of the CREBBP/EP300 repressor SNIP1. Involved in the translocation of AZIN2 from ER-Golgi intermediate compartment (ERGIC) to the cytosol. The polypeptide is Ornithine decarboxylase antizyme 1 (Oaz1) (Rattus norvegicus (Rat)).